Consider the following 123-residue polypeptide: Small ribosomal subunit protein uS12 (123 aa).

D89 is subject to 3-methylthioaspartic acid.

Belongs to the universal ribosomal protein uS12 family. Part of the 30S ribosomal subunit. Contacts proteins S8 and S17. May interact with IF1 in the 30S initiation complex.

Functionally, with S4 and S5 plays an important role in translational accuracy. In terms of biological role, interacts with and stabilizes bases of the 16S rRNA that are involved in tRNA selection in the A site and with the mRNA backbone. Located at the interface of the 30S and 50S subunits, it traverses the body of the 30S subunit contacting proteins on the other side and probably holding the rRNA structure together. The combined cluster of proteins S8, S12 and S17 appears to hold together the shoulder and platform of the 30S subunit. The chain is Small ribosomal subunit protein uS12 from Rhizobium meliloti (strain 1021) (Ensifer meliloti).